A 1867-amino-acid polypeptide reads, in one-letter code: Probable serine/threonine-protein kinase roco8 (1867 aa).

The DEP 1 domain occupies 16-93 (SSDGLQIKDR…DDYIFYQFDN (78 aa)). Disordered regions lie at residues 96-115 (NNNN…TTAT) and 121-225 (VSTK…NSFN). The span at 121–223 (VSTKIGSIGK…NSNSTYNSNS (103 aa)) shows a compositional bias: low complexity. Residues 264–342 (GDKGLKLQKK…NNNNGGGGVM (79 aa)) enclose the DEP 2 domain. 8 LRR repeats span residues 491 to 512 (RLDD…IINT), 515 to 536 (FLRI…ESIA), 540 to 561 (NLES…FSRL), 563 to 584 (LLTK…VFQL), 586 to 607 (NLEE…IGSL), 609 to 631 (SLEK…LGLL), 633 to 656 (RLKS…STLP), and 657 to 678 (LLEQ…ITSK). The Roc domain maps to 693–941 (GTETLSHIKL…NEIIQTLLNQ (249 aa)). Disordered regions lie at residues 763-813 (QNGI…KKRP) and 942-961 (SNNN…KQSN). Over residues 768-793 (TSSSNLNLSTGTLPPPTQLSSSTSEL) the composition is skewed to low complexity. A COR domain is found at 974-1111 (PSIYITLETN…ILYTLKNNSN (138 aa)). A disordered region spans residues 1163–1207 (SPSLSLSNSSQSVFTNPNNNNNNKSEQQQQQQQQQQQPQPISTSP). A Protein kinase domain is found at 1456 to 1864 (LIYQEEIGVG…TLNEIKDSTI (409 aa)). Residues 1462-1470 (IGVGGFSRV) and Lys-1483 each bind ATP. Residues 1509–1546 (SNSSLSISLSSSTSSLSPPIVNNNNNNNNLNNNLNNLN) are disordered. The active-site Proton acceptor is Asp-1721.

It belongs to the protein kinase superfamily. TKL Ser/Thr protein kinase family. ROCO subfamily.

The catalysed reaction is L-seryl-[protein] + ATP = O-phospho-L-seryl-[protein] + ADP + H(+). It catalyses the reaction L-threonyl-[protein] + ATP = O-phospho-L-threonyl-[protein] + ADP + H(+). This is Probable serine/threonine-protein kinase roco8 (roco8) from Dictyostelium discoideum (Social amoeba).